Consider the following 156-residue polypeptide: Putative pre-16S rRNA nuclease (156 aa).

It belongs to the YqgF nuclease family.

The protein localises to the cytoplasm. Could be a nuclease involved in processing of the 5'-end of pre-16S rRNA. This chain is Putative pre-16S rRNA nuclease, found in Rickettsia typhi (strain ATCC VR-144 / Wilmington).